The sequence spans 813 residues: UPF0508 protein KLLA0A06237g (813 aa).

Residues 478–537 are disordered; sequence KKDKSKSQKNSTDSLAKLSDTKSIHPPESAMSSHASTPSSTSKSSKSSKSSSTLSPSTCK. Low complexity predominate over residues 506 to 537; sequence SAMSSHASTPSSTSKSSKSSKSSSTLSPSTCK.

The protein belongs to the UPF0508 family.

In Kluyveromyces lactis (strain ATCC 8585 / CBS 2359 / DSM 70799 / NBRC 1267 / NRRL Y-1140 / WM37) (Yeast), this protein is UPF0508 protein KLLA0A06237g.